Here is a 119-residue protein sequence, read N- to C-terminus: Large ribosomal subunit protein uL18 (119 aa).

The protein belongs to the universal ribosomal protein uL18 family. As to quaternary structure, part of the 50S ribosomal subunit; part of the 5S rRNA/L5/L18/L25 subcomplex. Contacts the 5S and 23S rRNAs.

Functionally, this is one of the proteins that bind and probably mediate the attachment of the 5S RNA into the large ribosomal subunit, where it forms part of the central protuberance. This Borrelia duttonii (strain Ly) protein is Large ribosomal subunit protein uL18.